Reading from the N-terminus, the 690-residue chain is MTKDYLFEIGTEEMPAHVVSRSVKQLADRTKKYLKENGLSFKDIKTYSTPRRLTILVEDLAEKQDDIDEVKKGPAKKIAQDKDGNWTKAAQGFARGQGMTTDDIYFEELKGTEYAYVHVQKEGKKASDILMGMSDIIKAMTFPTKMRWDSNDFEFVRPIHWMVSLLGSEVVPVKLLDVVAGRKTQGHRFLGDSVVLANADDYEEALKSQYVIADADERKGMILNQIQELVAQHNWKVNIDKGLLEEVTNLVEYPTVFAGSFDEKYLNIPDEVLITSMKDNQRYFEVYDENGKLINHFIAVRNGNSEYLDNVIAGNEKVLVARLDDAQFFYDEDKKYPLAHFVDKLKNVSFHDKIGSVAEHMARVHIIGDYLGKKFNISETEMKDFDRVSDIYKFDLVTSMVGEFAELQGVMGMHYARLTGEDENVSVAIKESYMPTSAEGDLPSTTVGSLLSIADKLDTIISFFGAGMIPSSSNDPYALRRNAYGIVRILLNEGWSLPVKDVLPELIQLLSGKTAAKLPKDAEAENEIADFIRDRVKQQLQVEKYDYDVIDAVLASSQQDPIQILAAAKTLQMHHDDADFKPVVESLTRITNILKKAKYRNAAKVDESLFQDVSEEELNAGVNALEENTDLSIADLYKGFVELQPVINNYFESNMILDKDEKVKNNRLAQLLKVNNLADRMGDLSKLVIK.

The protein belongs to the class-II aminoacyl-tRNA synthetase family. As to quaternary structure, tetramer of two alpha and two beta subunits.

It localises to the cytoplasm. The catalysed reaction is tRNA(Gly) + glycine + ATP = glycyl-tRNA(Gly) + AMP + diphosphate. The chain is Glycine--tRNA ligase beta subunit from Lactobacillus gasseri (strain ATCC 33323 / DSM 20243 / BCRC 14619 / CIP 102991 / JCM 1131 / KCTC 3163 / NCIMB 11718 / NCTC 13722 / AM63).